We begin with the raw amino-acid sequence, 507 residues long: Probable cytochrome P450 6a18 (507 aa).

C451 is a binding site for heme.

This sequence belongs to the cytochrome P450 family. The cofactor is heme.

The protein resides in the endoplasmic reticulum membrane. It is found in the microsome membrane. Functionally, may be involved in the metabolism of insect hormones and in the breakdown of synthetic insecticides. The polypeptide is Probable cytochrome P450 6a18 (Cyp6a18) (Drosophila melanogaster (Fruit fly)).